The following is a 246-amino-acid chain: Small ribosomal subunit protein uS2 (246 aa).

The interval S225–E246 is disordered.

It belongs to the universal ribosomal protein uS2 family.

In Cellvibrio japonicus (strain Ueda107) (Pseudomonas fluorescens subsp. cellulosa), this protein is Small ribosomal subunit protein uS2.